The following is a 120-amino-acid chain: Large ribosomal subunit protein uL24 (120 aa).

This sequence belongs to the universal ribosomal protein uL24 family. In terms of assembly, part of the 50S ribosomal subunit.

Its function is as follows. One of two assembly initiator proteins, it binds directly to the 5'-end of the 23S rRNA, where it nucleates assembly of the 50S subunit. Functionally, located at the polypeptide exit tunnel on the outside of the subunit. In Methanocaldococcus jannaschii (strain ATCC 43067 / DSM 2661 / JAL-1 / JCM 10045 / NBRC 100440) (Methanococcus jannaschii), this protein is Large ribosomal subunit protein uL24.